A 320-amino-acid chain; its full sequence is Zinc transporter ZitB (320 aa).

6 consecutive transmembrane segments (helical) span residues 16-36, 43-63, 85-105, 117-137, 153-173, and 180-200; these read LLAA…GGLL, LADA…LVAV, AAFV…WEAI, VPML…FWLL, LHVL…IIIL, and IDPI…WALL.

This sequence belongs to the cation diffusion facilitator (CDF) transporter (TC 2.A.4) family. SLC30A subfamily.

The protein resides in the cell inner membrane. Functionally, involved in zinc efflux across the cytoplasmic membrane, thus reducing zinc accumulation in the cytoplasm and rendering bacteria more resistant to zinc. It may contribute to zinc homeostasis at low concentrations of zinc. The polypeptide is Zinc transporter ZitB (Pectobacterium atrosepticum (strain SCRI 1043 / ATCC BAA-672) (Erwinia carotovora subsp. atroseptica)).